Consider the following 690-residue polypeptide: Methionine--tRNA ligase 1 (690 aa).

The 'HIGH' region motif lies at 11–21 (PYANGHIHIGH). Zn(2+)-binding residues include C142, C145, C155, and C158. The short motif at 328–332 (KMSKS) is the 'KMSKS' region element. K331 contributes to the ATP binding site. Residues 590–690 (DFSKVDLRVA…SGAKPGMRVH (101 aa)) enclose the tRNA-binding domain.

It belongs to the class-I aminoacyl-tRNA synthetase family. MetG type 1 subfamily. As to quaternary structure, homodimer. The cofactor is Zn(2+).

The protein resides in the cytoplasm. It carries out the reaction tRNA(Met) + L-methionine + ATP = L-methionyl-tRNA(Met) + AMP + diphosphate. In terms of biological role, is required not only for elongation of protein synthesis but also for the initiation of all mRNA translation through initiator tRNA(fMet) aminoacylation. The protein is Methionine--tRNA ligase 1 of Sorangium cellulosum (strain So ce56) (Polyangium cellulosum (strain So ce56)).